Here is a 152-residue protein sequence, read N- to C-terminus: Deoxyuridine 5'-triphosphate nucleotidohydrolase (152 aa).

Substrate contacts are provided by residues 72–74 (RSG), Asn85, and 89–91 (TVD).

This sequence belongs to the dUTPase family. It depends on Mg(2+) as a cofactor.

The catalysed reaction is dUTP + H2O = dUMP + diphosphate + H(+). Its pathway is pyrimidine metabolism; dUMP biosynthesis; dUMP from dCTP (dUTP route): step 2/2. In terms of biological role, this enzyme is involved in nucleotide metabolism: it produces dUMP, the immediate precursor of thymidine nucleotides and it decreases the intracellular concentration of dUTP so that uracil cannot be incorporated into DNA. The protein is Deoxyuridine 5'-triphosphate nucleotidohydrolase of Nitrobacter winogradskyi (strain ATCC 25391 / DSM 10237 / CIP 104748 / NCIMB 11846 / Nb-255).